Consider the following 323-residue polypeptide: Phosphomevalonate kinase (323 aa).

It belongs to the GHMP kinase family. As to quaternary structure, homodimer. Mg(2+) serves as cofactor.

The enzyme catalyses (R)-5-phosphomevalonate + ATP = (R)-5-diphosphomevalonate + ADP. It participates in isoprenoid biosynthesis; isopentenyl diphosphate biosynthesis via mevalonate pathway; isopentenyl diphosphate from (R)-mevalonate: step 2/3. Functionally, catalyzes the phosphorylation of (R)-mevalonate 5-phosphate (MVAP) to (R)-mevalonate 5-diphosphate (MVAPP). Functions in the mevalonate (MVA) pathway leading to isopentenyl diphosphate (IPP), a key precursor for the biosynthesis of isoprenoid compounds such as archaeal membrane lipids. The sequence is that of Phosphomevalonate kinase from Saccharolobus solfataricus (strain ATCC 35092 / DSM 1617 / JCM 11322 / P2) (Sulfolobus solfataricus).